A 320-amino-acid polypeptide reads, in one-letter code: ATP-dependent 6-phosphofructokinase (320 aa).

Gly12 serves as a coordination point for ATP. ADP-binding positions include 22-26 (RGVVR) and 55-60 (RYSVSD). Residues 73-74 (RF) and 103-106 (GDGS) contribute to the ATP site. Asp104 serves as a coordination point for Mg(2+). 126–128 (TID) contributes to the substrate binding site. The Proton acceptor role is filled by Asp128. Position 155 (Arg155) interacts with ADP. Residues Arg163 and 170-172 (MGR) each bind substrate. Residues 186-188 (GCE), Lys212, and 214-216 (KKH) each bind ADP. Substrate contacts are provided by residues Glu223, Arg244, and 250–253 (HIQR).

Belongs to the phosphofructokinase type A (PFKA) family. ATP-dependent PFK group I subfamily. Prokaryotic clade 'B1' sub-subfamily. As to quaternary structure, homotetramer. It depends on Mg(2+) as a cofactor.

The protein resides in the cytoplasm. It catalyses the reaction beta-D-fructose 6-phosphate + ATP = beta-D-fructose 1,6-bisphosphate + ADP + H(+). It participates in carbohydrate degradation; glycolysis; D-glyceraldehyde 3-phosphate and glycerone phosphate from D-glucose: step 3/4. Its activity is regulated as follows. Allosterically activated by ADP and other diphosphonucleosides, and allosterically inhibited by phosphoenolpyruvate. Functionally, catalyzes the phosphorylation of D-fructose 6-phosphate to fructose 1,6-bisphosphate by ATP, the first committing step of glycolysis. The chain is ATP-dependent 6-phosphofructokinase from Buchnera aphidicola subsp. Schizaphis graminum (strain Sg).